Consider the following 282-residue polypeptide: Pantothenate synthetase (282 aa).

Residue 26–33 (MGNLHDGH) participates in ATP binding. The Proton donor role is filled by His33. A (R)-pantoate-binding site is contributed by Gln57. A beta-alanine-binding site is contributed by Gln57. 148–151 (GKKD) contacts ATP. Position 154 (Gln154) interacts with (R)-pantoate. 185-188 (LSSR) is a binding site for ATP.

This sequence belongs to the pantothenate synthetase family. Homodimer.

It localises to the cytoplasm. It carries out the reaction (R)-pantoate + beta-alanine + ATP = (R)-pantothenate + AMP + diphosphate + H(+). It participates in cofactor biosynthesis; (R)-pantothenate biosynthesis; (R)-pantothenate from (R)-pantoate and beta-alanine: step 1/1. In terms of biological role, catalyzes the condensation of pantoate with beta-alanine in an ATP-dependent reaction via a pantoyl-adenylate intermediate. The sequence is that of Pantothenate synthetase from Polaromonas sp. (strain JS666 / ATCC BAA-500).